The primary structure comprises 393 residues: Formate-dependent phosphoribosylglycinamide formyltransferase (393 aa).

N(1)-(5-phospho-beta-D-ribosyl)glycinamide is bound by residues 22–23 and glutamate 82; that span reads EL. ATP contacts are provided by residues arginine 114, lysine 155, 160–165, 195–198, and glutamate 203; these read SSGKGQ and EGFI. The 190-residue stretch at 119–308 folds into the ATP-grasp domain; sequence RLAAEELDLP…QFALHARAIL (190 aa). Positions 267 and 279 each coordinate Mg(2+). N(1)-(5-phospho-beta-D-ribosyl)glycinamide contacts are provided by residues aspartate 286, lysine 356, and 363–364; that span reads RR.

It belongs to the PurK/PurT family. In terms of assembly, homodimer.

The catalysed reaction is N(1)-(5-phospho-beta-D-ribosyl)glycinamide + formate + ATP = N(2)-formyl-N(1)-(5-phospho-beta-D-ribosyl)glycinamide + ADP + phosphate + H(+). The protein operates within purine metabolism; IMP biosynthesis via de novo pathway; N(2)-formyl-N(1)-(5-phospho-D-ribosyl)glycinamide from N(1)-(5-phospho-D-ribosyl)glycinamide (formate route): step 1/1. Functionally, involved in the de novo purine biosynthesis. Catalyzes the transfer of formate to 5-phospho-ribosyl-glycinamide (GAR), producing 5-phospho-ribosyl-N-formylglycinamide (FGAR). Formate is provided by PurU via hydrolysis of 10-formyl-tetrahydrofolate. This chain is Formate-dependent phosphoribosylglycinamide formyltransferase, found in Pseudomonas putida (strain W619).